The following is a 352-amino-acid chain: Fe(3+) ions import ATP-binding protein FbpC 1 (352 aa).

Positions 11–241 constitute an ABC transporter domain; the sequence is VELKHITKRF…PASRFMASFM (231 aa). 43–50 contributes to the ATP binding site; it reads GPSGCGKT.

This sequence belongs to the ABC transporter superfamily. Fe(3+) ion importer (TC 3.A.1.10) family. The complex is composed of two ATP-binding proteins (FbpC), two transmembrane proteins (FbpB) and a solute-binding protein (FbpA).

The protein resides in the cell inner membrane. It carries out the reaction Fe(3+)(out) + ATP + H2O = Fe(3+)(in) + ADP + phosphate + H(+). Its function is as follows. Part of the ABC transporter complex FbpABC involved in Fe(3+) ions import. Responsible for energy coupling to the transport system. The protein is Fe(3+) ions import ATP-binding protein FbpC 1 of Pectobacterium atrosepticum (strain SCRI 1043 / ATCC BAA-672) (Erwinia carotovora subsp. atroseptica).